A 90-amino-acid polypeptide reads, in one-letter code: Phosphocarrier protein HPr (90 aa).

Residues 1 to 89 enclose the HPr domain; sequence MPALEITIIN…ELINNRFDEG (89 aa). Histidine 15 serves as the catalytic Pros-phosphohistidine intermediate.

The protein belongs to the HPr family.

Its subcellular location is the cytoplasm. In terms of biological role, general (non sugar-specific) component of the phosphoenolpyruvate-dependent sugar phosphotransferase system (sugar PTS). This major carbohydrate active-transport system catalyzes the phosphorylation of incoming sugar substrates concomitantly with their translocation across the cell membrane. The phosphoryl group from phosphoenolpyruvate (PEP) is transferred to the phosphoryl carrier protein HPr by enzyme I. Phospho-HPr then transfers it to the PTS EIIA domain. The protein is Phosphocarrier protein HPr (ptsH) of Pseudomonas aeruginosa (strain ATCC 15692 / DSM 22644 / CIP 104116 / JCM 14847 / LMG 12228 / 1C / PRS 101 / PAO1).